We begin with the raw amino-acid sequence, 136 residues long: Putative pre-16S rRNA nuclease (136 aa).

The protein belongs to the YqgF nuclease family.

It localises to the cytoplasm. Its function is as follows. Could be a nuclease involved in processing of the 5'-end of pre-16S rRNA. This is Putative pre-16S rRNA nuclease from Francisella tularensis subsp. tularensis (strain WY96-3418).